The chain runs to 521 residues: Cyclic AMP-responsive element-binding protein 3-like protein 2 (521 aa).

Over 1-378 (MEVLESGEQS…CKLAGTQTGT (378 aa)) the chain is Cytoplasmic. At Ser93 the chain carries Phosphoserine. Lys178 participates in a covalent cross-link: Glycyl lysine isopeptide (Lys-Gly) (interchain with G-Cter in SUMO2). A Phosphoserine modification is found at Ser191. The segment at 196-264 (SVDQLHLPPT…PHKLQGSGPL (69 aa)) is disordered. Residues 208 to 220 (SSHSSDSEGSLSP) are compositionally biased toward low complexity. The region spanning 294-357 (ALKKIRRKIK…RTLLQQLQKL (64 aa)) is the bZIP domain. Residues 296–325 (KKIRRKIKNKISAQESRRKKKEYMDSLEKK) form a basic motif region. Positions 336 to 357 (LRKKVEVLENTNRTLLQQLQKL) are leucine-zipper. The helical; Signal-anchor for type II membrane protein transmembrane segment at 379-399 (CLMVVVLCFAVAFGSLFQGYG) threads the bilayer. At 400–521 (LYPSATKMAL…ELERRVNATF (122 aa)) the chain is on the lumenal side. Residues 427–430 (RNLL) carry the S1P recognition motif. Asn505 and Asn518 each carry an N-linked (GlcNAc...) asparagine glycan.

This sequence belongs to the bZIP family. ATF subfamily. In terms of assembly, binds DNA as a dimer. Post-translationally, upon ER stress, translocated to the Golgi apparatus, where it is processed by regulated intramembrane proteolysis (RIP) to release the cytosol-facing N-terminal transcription factor domain. The cleavage is performed sequentially by site-1 and site-2 proteases (S1P/MBTPS1 and S2P/MBTPS2). N-glycosylated. In terms of processing, ubiquitinated by HRD1/SYVN1; undergoes 'Lys-48'-linked ubiquitination, followed by rapid proteasomal degradation under normal conditions. Upon ER stress, SYVN1 E3 ubiquitin-protein ligase dissociates from its substrate, ubiquitination does not occur and CREB3L2 is stabilized.

It localises to the endoplasmic reticulum membrane. Its subcellular location is the nucleus. In terms of biological role, transcription factor involved in unfolded protein response (UPR). In the absence of endoplasmic reticulum (ER) stress, inserted into ER membranes, with N-terminal DNA-binding and transcription activation domains oriented toward the cytosolic face of the membrane. In response to ER stress, transported to the Golgi, where it is cleaved in a site-specific manner by resident proteases S1P/MBTPS1 and S2P/MBTPS2. The released N-terminal cytosolic domain is translocated to the nucleus to effect transcription of specific target genes. Plays a critical role in chondrogenesis by activating the transcription of SEC23A, which promotes the transport and secretion of cartilage matrix proteins, and possibly that of ER biogenesis-related genes. In a neuroblastoma cell line, protects cells from ER stress-induced death. In vitro activates transcription of target genes via direct binding to the CRE site. The chain is Cyclic AMP-responsive element-binding protein 3-like protein 2 (Creb3l2) from Rattus norvegicus (Rat).